The primary structure comprises 362 residues: Phosphoserine aminotransferase (362 aa).

R43 contacts L-glutamate. Pyridoxal 5'-phosphate contacts are provided by residues 77-78 (AT), W103, T153, D173, and Q196. K197 is modified (N6-(pyridoxal phosphate)lysine). Residue 238–239 (NT) participates in pyridoxal 5'-phosphate binding.

It belongs to the class-V pyridoxal-phosphate-dependent aminotransferase family. SerC subfamily. As to quaternary structure, homodimer. Requires pyridoxal 5'-phosphate as cofactor.

The protein resides in the cytoplasm. It catalyses the reaction O-phospho-L-serine + 2-oxoglutarate = 3-phosphooxypyruvate + L-glutamate. The catalysed reaction is 4-(phosphooxy)-L-threonine + 2-oxoglutarate = (R)-3-hydroxy-2-oxo-4-phosphooxybutanoate + L-glutamate. Its pathway is amino-acid biosynthesis; L-serine biosynthesis; L-serine from 3-phospho-D-glycerate: step 2/3. It functions in the pathway cofactor biosynthesis; pyridoxine 5'-phosphate biosynthesis; pyridoxine 5'-phosphate from D-erythrose 4-phosphate: step 3/5. In terms of biological role, catalyzes the reversible conversion of 3-phosphohydroxypyruvate to phosphoserine and of 3-hydroxy-2-oxo-4-phosphonooxybutanoate to phosphohydroxythreonine. This chain is Phosphoserine aminotransferase, found in Xylella fastidiosa (strain Temecula1 / ATCC 700964).